The following is a 600-amino-acid chain: Nisin transport ATP-binding protein NisT (600 aa).

Transmembrane regions (helical) follow at residues 34–54 (AIYLIVLNAITAFVPLASLFI), 69–89 (LINIIIIYFIVQVITTVLGQL), 147–167 (AIIVELSSFISLLSSLFFIGT), 168–188 (WNIGVAILLLIVPVLSLVLFL), and 260–280 (IFLDFILNLINILTIFAMILS). Positions 34–317 (AIYLIVLNAI…MIQNIYIIYN (284 aa)) constitute an ABC transmembrane type-1 domain. Residues 352 to 592 (VKVINLSYVY…CQYYQELYYS (241 aa)) enclose the ABC transporter domain. Position 386–393 (386–393 (GKNGSGKS)) interacts with ATP.

It belongs to the ABC transporter superfamily. Nisin exporter (TC 3.A.1.111.3) family.

It is found in the cell membrane. Functionally, probably implicated in the export process of the lantibiotic nisin. This chain is Nisin transport ATP-binding protein NisT (nisT), found in Lactococcus lactis subsp. lactis (Streptococcus lactis).